The primary structure comprises 22 residues: VIGVXVPLFKGKSQLLDPTXXG.

In Bombyx mori (Silk moth), this protein is Unknown protein 20 from 2D-PAGE.